Consider the following 520-residue polypeptide: Amine oxidase [flavin-containing] B (520 aa).

An N-acetylserine modification is found at Ser2. At 2-489 (SNKCDVVVVG…TFLERHLPSV (488 aa)) the chain is on the cytoplasmic side. Lys52 carries the post-translational modification N6-acetyllysine. Cys397 carries the post-translational modification S-8alpha-FAD cysteine. The chain crosses the membrane as a helical; Anchor for type IV membrane protein span at residues 490–516 (PGLLRLIGLTTIFSATALGFLAHKRGL). The Mitochondrial intermembrane segment spans residues 517–520 (LVRV).

Monomer, homo- or heterodimer (containing two subunits of similar size). Each subunit contains a covalently bound flavin. Enzymatically active as monomer. Requires FAD as cofactor.

The protein resides in the mitochondrion outer membrane. The catalysed reaction is a secondary aliphatic amine + O2 + H2O = a primary amine + an aldehyde + H2O2. It carries out the reaction (R)-adrenaline + O2 + H2O = (R)-3,4-dihydroxymandelaldehyde + methylamine + H2O2. It catalyses the reaction a primary methyl amine + O2 + H2O = an aldehyde + H2O2 + NH4(+). The enzyme catalyses benzylamine + O2 + H2O = benzaldehyde + H2O2 + NH4(+). The catalysed reaction is dopamine + O2 + H2O = 3,4-dihydroxyphenylacetaldehyde + H2O2 + NH4(+). It carries out the reaction tyramine + O2 + H2O = (4-hydroxyphenyl)acetaldehyde + H2O2 + NH4(+). It catalyses the reaction (R)-noradrenaline + O2 + H2O = (R)-3,4-dihydroxymandelaldehyde + H2O2 + NH4(+). The enzyme catalyses 2-phenylethylamine + O2 + H2O = 2-phenylacetaldehyde + H2O2 + NH4(+). The catalysed reaction is N-acetylputrescine + O2 + H2O = 4-acetamidobutanal + H2O2 + NH4(+). Its activity is regulated as follows. Inhibited by deprenyl. In terms of biological role, catalyzes the oxidative deamination of primary and some secondary amines such as neurotransmitters, and exogenous amines including the tertiary amine, neurotoxin 1-methyl-4-phenyl-1,2,3,6-tetrahydropyridine (MPTP), with concomitant reduction of oxygen to hydrogen peroxide and participates in the metabolism of neuroactive and vasoactive amines in the central nervous system and peripheral tissues. Preferentially degrades benzylamine and phenylethylamine. The sequence is that of Amine oxidase [flavin-containing] B from Homo sapiens (Human).